A 425-amino-acid chain; its full sequence is MNIKQIKAREVLDSRGNPTVEVDVILDDDTIGSAMVPSGASTGQREALELRDGGTRYLGKGVLKAVEFVNTEICNTLINFGIEDLGKIDQAMIDLDGTETKSRLGANAILAVSLAVAHANANRQHKPLYMSLNQGENYKLPVPMMNIINGGEHANNNVDIQEFMIIPAGAPSFKEALRYGAEVFHHLKAVLEAKNMNTTVGDEGGFAPDLSSNEDAIKVILEAIDNAGYKAGKDIFIGIDAASSEFYENGTYNLVSENKSLNSEEFVDYLANWVENYPIISIEDGMDENDWNGWNLLTKKIGDKVQLVGDDLYVTNSKFLKQGIEKNITNSILIKVNQIGTLTETFQVMKMATDAGYTSVMSHRSGETEDTTIADLAVATGCGQIKTGSLSRSDRLAKYNRLLRIEEELGAKAVYPGLDAFNHLN.

Residue glutamine 161 participates in (2R)-2-phosphoglycerate binding. Glutamate 203 (proton donor) is an active-site residue. 3 residues coordinate Mg(2+): aspartate 240, glutamate 283, and aspartate 310. 4 residues coordinate (2R)-2-phosphoglycerate: lysine 335, arginine 364, serine 365, and lysine 386. Catalysis depends on lysine 335, which acts as the Proton acceptor.

This sequence belongs to the enolase family. As to quaternary structure, component of the RNA degradosome, a multiprotein complex involved in RNA processing and mRNA degradation. Mg(2+) serves as cofactor.

It is found in the cytoplasm. The protein resides in the secreted. It localises to the cell surface. It carries out the reaction (2R)-2-phosphoglycerate = phosphoenolpyruvate + H2O. It participates in carbohydrate degradation; glycolysis; pyruvate from D-glyceraldehyde 3-phosphate: step 4/5. Functionally, catalyzes the reversible conversion of 2-phosphoglycerate (2-PG) into phosphoenolpyruvate (PEP). It is essential for the degradation of carbohydrates via glycolysis. This chain is Enolase, found in Ruthia magnifica subsp. Calyptogena magnifica.